Reading from the N-terminus, the 743-residue chain is NAD(P)H-quinone oxidoreductase subunit 5, chloroplastic (743 aa).

Transmembrane regions (helical) follow at residues 9 to 29 (WIIP…LLLF), 40 to 60 (WAFQ…NLSI), 89 to 109 (IDPL…MVLI), 125 to 145 (FAYM…SNLI), 147 to 167 (IYIF…FWFT), 185 to 205 (GDFG…SFEF), 224 to 244 (VFVT…SAQF), 258 to 278 (TPIS…FLVA), 284 to 304 (FIVI…TVFF), 327 to 347 (LGYM…FHLI), 354 to 374 (ALLF…VGYC), 396 to 416 (NSFL…CFWS), 425 to 445 (WLYS…TAFY), 551 to 571 (LFPI…GIPF), 607 to 627 (VFSV…YKPV), and 723 to 743 (YLFF…FLNL).

The protein belongs to the complex I subunit 5 family. In terms of assembly, NDH is composed of at least 16 different subunits, 5 of which are encoded in the nucleus.

The protein localises to the plastid. It is found in the chloroplast thylakoid membrane. It carries out the reaction a plastoquinone + NADH + (n+1) H(+)(in) = a plastoquinol + NAD(+) + n H(+)(out). It catalyses the reaction a plastoquinone + NADPH + (n+1) H(+)(in) = a plastoquinol + NADP(+) + n H(+)(out). Functionally, NDH shuttles electrons from NAD(P)H:plastoquinone, via FMN and iron-sulfur (Fe-S) centers, to quinones in the photosynthetic chain and possibly in a chloroplast respiratory chain. The immediate electron acceptor for the enzyme in this species is believed to be plastoquinone. Couples the redox reaction to proton translocation, and thus conserves the redox energy in a proton gradient. The protein is NAD(P)H-quinone oxidoreductase subunit 5, chloroplastic (ndhF) of Helianthus annuus (Common sunflower).